Reading from the N-terminus, the 253-residue chain is Testis-expressed protein 47 (253 aa).

The polypeptide is Testis-expressed protein 47 (Rattus norvegicus (Rat)).